The sequence spans 621 residues: tRNA uridine 5-carboxymethylaminomethyl modification enzyme MnmG (621 aa).

FAD is bound at residue 17 to 22 (GGGHAG). 276 to 290 (GPRYCPSIEDKIMKF) lines the NAD(+) pocket.

The protein belongs to the MnmG family. In terms of assembly, homodimer. Heterotetramer of two MnmE and two MnmG subunits. Requires FAD as cofactor.

It localises to the cytoplasm. NAD-binding protein involved in the addition of a carboxymethylaminomethyl (cmnm) group at the wobble position (U34) of certain tRNAs, forming tRNA-cmnm(5)s(2)U34. This chain is tRNA uridine 5-carboxymethylaminomethyl modification enzyme MnmG, found in Zymomonas mobilis subsp. mobilis (strain ATCC 31821 / ZM4 / CP4).